Consider the following 179-residue polypeptide: Large ribosomal subunit protein uL6 (179 aa).

The protein belongs to the universal ribosomal protein uL6 family. In terms of assembly, part of the 50S ribosomal subunit.

Functionally, this protein binds to the 23S rRNA, and is important in its secondary structure. It is located near the subunit interface in the base of the L7/L12 stalk, and near the tRNA binding site of the peptidyltransferase center. In Syntrophus aciditrophicus (strain SB), this protein is Large ribosomal subunit protein uL6.